Consider the following 470-residue polypeptide: V-type proton ATPase subunit S1 (470 aa).

The first 41 residues, 1–41 (MMAAMATARVRMGPRCAQALWRMPWLPVFLSLAAAAAAAAA), serve as a signal peptide directing secretion. Positions 42–231 (EQQVPLVLWS…TAVRPSRVAR (190 aa)) are excised as a propeptide. The Lumenal segment spans residues 42–419 (EQQVPLVLWS…EQFSYASDCA (378 aa)). 7 N-linked (GlcNAc...) asparagine glycosylation sites follow: Asn-170, Asn-261, Asn-273, Asn-296, Asn-303, Asn-350, and Asn-357. A disulfide bridge connects residues Cys-371 and Cys-418. A helical transmembrane segment spans residues 420–440 (SFFSPGIWMGLLTSLFMLFIF). Residues 441-470 (TYGLHMILSLKTMDRFDDHKGPTISLTQIV) lie on the Cytoplasmic side of the membrane. At Ser-465 the chain carries Phosphoserine.

This sequence belongs to the vacuolar ATPase subunit S1 family. Accessory component of the multisubunit proton-transporting vacuolar (V)-ATPase protein pump. Interacts (via N-terminus) with ATP6AP2 (via N-terminus). Interacts with RNASEK. Interacts with TMEM106B (via C-terminus). In terms of processing, N-glycosylated. In terms of tissue distribution, widely expressed, with highest levels in brain and lowest in liver and duodenum.

Its subcellular location is the endoplasmic reticulum membrane. The protein localises to the endoplasmic reticulum-Golgi intermediate compartment membrane. It localises to the cytoplasmic vesicle. It is found in the secretory vesicle. The protein resides in the synaptic vesicle membrane. Its subcellular location is the clathrin-coated vesicle membrane. Accessory subunit of the proton-transporting vacuolar (V)-ATPase protein pump, which is required for luminal acidification of secretory vesicles. Guides the V-type ATPase into specialized subcellular compartments, such as neuroendocrine regulated secretory vesicles or the ruffled border of the osteoclast, thereby regulating its activity. Involved in membrane trafficking and Ca(2+)-dependent membrane fusion. May play a role in the assembly of the V-type ATPase complex. In aerobic conditions, involved in intracellular iron homeostasis, thus triggering the activity of Fe(2+) prolyl hydroxylase (PHD) enzymes, and leading to HIF1A hydroxylation and subsequent proteasomal degradation. In islets of Langerhans cells, may regulate the acidification of dense-core secretory granules. The sequence is that of V-type proton ATPase subunit S1 (ATP6AP1) from Homo sapiens (Human).